Here is a 383-residue protein sequence, read N- to C-terminus: tRNA(Met) cytidine acetate ligase (383 aa).

ATP is bound by residues 7-20 (ITEY…HRYH), Gly-101, Asn-150, and Arg-175.

The protein belongs to the TmcAL family.

It is found in the cytoplasm. The catalysed reaction is cytidine(34) in elongator tRNA(Met) + acetate + ATP = N(4)-acetylcytidine(34) in elongator tRNA(Met) + AMP + diphosphate. Catalyzes the formation of N(4)-acetylcytidine (ac(4)C) at the wobble position of elongator tRNA(Met), using acetate and ATP as substrates. First activates an acetate ion to form acetyladenylate (Ac-AMP) and then transfers the acetyl group to tRNA to form ac(4)C34. The sequence is that of tRNA(Met) cytidine acetate ligase from Lactiplantibacillus plantarum (strain ATCC BAA-793 / NCIMB 8826 / WCFS1) (Lactobacillus plantarum).